Consider the following 377-residue polypeptide: MVKSDYYEILGVSKNADEREIKKSYKRLAMKFHPDRNPGDVSAESKFKEIKEAYEVLSNPEKRSAYDQYGHAIFEQNSGGMGGSNTGGSDFSDIFGDVFGDIFGGSRRSRSRRGSDLRYDIELSLEEAVKGVVREICVPTLVTCLQCRGSGAKSSASIVSCVTCHGHGQIQMRQGFFSVQQSCPSCNGHGKIIKEICNKCRGSGRIERTKTLSVKIPAGVSTGDRIRLSGEGESGKNGAPAGDLYVQVQIKKHPIFDREEKNLYCEVPISFSMAALGGEIEVPTLDGRVKLKIPPETQTGKLFRMRGKGVKSVRGIGGHGDLLCRVVVETPVRLSDRQKQLLQDLSDSFGGPYGHKNSPKSKTFFDGVKKFFDDLTR.

The region spanning 5 to 70 (DYYEILGVSK…EKRSAYDQYG (66 aa)) is the J domain. The segment at 131-209 (GVVREICVPT…CRGSGRIERT (79 aa)) adopts a CR-type zinc-finger fold. The Zn(2+) site is built by Cys144, Cys147, Cys161, Cys164, Cys183, Cys186, Cys197, and Cys200. 4 CXXCXGXG motif repeats span residues 144 to 151 (CLQCRGSG), 161 to 168 (CVTCHGHG), 183 to 190 (CPSCNGHG), and 197 to 204 (CNKCRGSG).

The protein belongs to the DnaJ family. In terms of assembly, homodimer. It depends on Zn(2+) as a cofactor.

The protein resides in the cytoplasm. Its function is as follows. Participates actively in the response to hyperosmotic and heat shock by preventing the aggregation of stress-denatured proteins and by disaggregating proteins, also in an autonomous, DnaK-independent fashion. Unfolded proteins bind initially to DnaJ; upon interaction with the DnaJ-bound protein, DnaK hydrolyzes its bound ATP, resulting in the formation of a stable complex. GrpE releases ADP from DnaK; ATP binding to DnaK triggers the release of the substrate protein, thus completing the reaction cycle. Several rounds of ATP-dependent interactions between DnaJ, DnaK and GrpE are required for fully efficient folding. Also involved, together with DnaK and GrpE, in the DNA replication of plasmids through activation of initiation proteins. The protein is Chaperone protein DnaJ of Blochmanniella floridana.